The chain runs to 439 residues: Testican-1 (439 aa).

A signal peptide spans 1 to 21 (MPAIAVLAAAAAAWCFLQVES). 5 disulfides stabilise this stretch: C86–C97, C91–C107, C136–C166, C139–C159, and C148–C180. Residues 130–182 (PSNLVKCKPCPVAQSAMVCGSDGHSYTSKCKLEFHACSTGKSLATLCDGPCPC) form the Kazal-like domain. A glycan (O-linked (GalNAc...) threonine) is linked at T228. Residues 310 to 376 (GLPCQNEMNR…GSRKQGAVSC (67 aa)) form the Thyroglobulin type-1 domain. Disulfide bonds link C313-C337, C348-C355, and C357-C376. 2 O-linked (Xyl...) (glycosaminoglycan) serine glycosylation sites follow: S383 and S388. The interval 415-439 (VHTRAVTEDDEDEDDDKEDEVGYIW) is disordered. Acidic residues predominate over residues 422-439 (EDDEDEDDDKEDEVGYIW).

In terms of processing, O-glycosylated. Glycosaminoglycan that contains chondroitin sulfate and heparan sulfate.

It is found in the secreted. The protein resides in the extracellular space. It localises to the extracellular matrix. Its function is as follows. May play a role in cell-cell and cell-matrix interactions. May contribute to various neuronal mechanisms in the central nervous system. The sequence is that of Testican-1 (SPOCK1) from Homo sapiens (Human).